The chain runs to 6199 residues: Adhesion G-protein coupled receptor V1 (6199 aa).

Residues 1–23 (MPAVLALSGLLLMLLTVSVRSES) form the signal peptide. 21 consecutive Calx-beta domains span residues 24–109 (AELR…VFIL), 126–230 (ATIT…VQLT), 249–355 (ISRN…QVVL), 380–480 (DKPY…LKLI), 637–737 (PDIA…ILTL), 753–853 (SREI…VVLS), 869–972 (NITV…ITLL), 997–1083 (IYFA…YIVL), 1099–1199 (TVVI…LRLM), 1434–1534 (PIPG…FYLQ), 1563–1655 (GLFS…RVRL), 1835–1937 (IIVT…VRLT), 1963–2063 (LFVF…FLEL), 2092–2190 (QVII…RIEL), 2208–2308 (ITIL…KVEL), 2425–2525 (AAFC…FIIK), 2582–2659 (VREE…QIGL), 2673–2773 (DTVT…RVIL), 2814–2908 (PSSL…LVNI), 2931–3029 (EIII…QLIL), and 3054–3154 (GHGI…TVTL). Topologically, residues 24–5803 (AELRFQGQTQ…IESLASFNEA (5780 aa)) are extracellular. EAR repeat units follow at residues 3239-3284 (VLAV…KWQG), 3285-3333 (VFVP…RVQA), 3336-3372 (NLTL…VWNR), 3374-3420 (SFFL…QWTD), 3422-3467 (RFQN…LWGS), and 3471-3513 (VFQQ…SWRS). 13 Calx-beta domains span residues 3562–3605 (SNQS…RVSL), 3619–3719 (QVTF…TIVL), 3778–3854 (ITLS…FVNI), 3916–3985 (VLRL…MVKL), 4000–4103 (VVVS…IQLL), 4120–4220 (VVIR…QLRL), 4247–4335 (HGLF…FLNI), 4371–4471 (VIIQ…LQLT), 4493–4593 (DSPN…IIML), 4615–4715 (KFGD…TLRL), 4993–5076 (QHLV…VNLT), 5125–5225 (SEDS…IYLS), and 5260–5360 (VGFS…LVEV). Positions 5636–5801 (PYFTIAAHHW…AEIESLASFN (166 aa)) constitute a GAIN-B domain. Cystine bridges form between cysteine 5751–cysteine 5780 and cysteine 5768–cysteine 5782. The interval 5751-5801 (CLLWNQAAESWLSDGQFCRLVDDTQNYVECACSHLSIYTAYAEIESLASFN) is GPS. Residues 5804 to 5824 (FYAAGFICISGFALAMVSHLM) form a helical membrane-spanning segment. At 5825-5834 (CARFLMFAAK) the chain is on the cytoplasmic side. A helical transmembrane segment spans residues 5835–5855 (LLTHMMVACLGTQICFLVSAF). At 5856–5864 (RGRMFSEDS) the chain is on the extracellular side. A helical membrane pass occupies residues 5865 to 5885 (CAALGLFFHYFHLSQFGWMLV). The Cytoplasmic segment spans residues 5886–5908 (QAINFWQILVMNDEHTERRYLLY). The helical transmembrane segment at 5909–5929 (FLLSWGLPALVIIVLVVVLLG) threads the bilayer. The Extracellular segment spans residues 5930–5954 (GFGWSIHSVYGLVQGDLCFIPNVYA). A helical transmembrane segment spans residues 5955–5975 (ALCTAALVPLICLVGVLVIFI). Residues 5976-6001 (HAYQVTQQWKAYDDIYRGRTNSSEVP) are Cytoplasmic-facing. The chain crosses the membrane as a helical span at residues 6002–6022 (MMLYLFALVTLVCVWAGLHMA). The Extracellular portion of the chain corresponds to 6023–6025 (YRY). Residues 6026–6046 (IWMLILLVIFNIFLGLYVFSV) form a helical membrane-spanning segment. Over 6047 to 6199 (YFVMHNQLFW…RRIPIADTHL (153 aa)) the chain is Cytoplasmic.

The protein belongs to the G-protein coupled receptor 2 family. Adhesion G-protein coupled receptor (ADGR) subfamily. Heterodimer of 2 chains generated by proteolytic processing; the large extracellular N-terminal fragment and the membrane-bound C-terminal fragment predominantly remain associated and non-covalently linked. Post-translationally, autoproteolytically processed at the GPS region of the GAIN-B domain; this cleavage modulates receptor activity.

The protein resides in the cell membrane. The protein localises to the cell projection. Its subcellular location is the stereocilium membrane. It is found in the photoreceptor inner segment. Its function is as follows. Receptor that may have an important role in the development of the sensory nervous system. The sequence is that of Adhesion G-protein coupled receptor V1 (adgrv1) from Danio rerio (Zebrafish).